We begin with the raw amino-acid sequence, 147 residues long: Nucleoside diphosphate kinase (147 aa).

ATP contacts are provided by Lys11, Phe59, Arg87, Thr93, Arg104, and Asn114. Catalysis depends on His117, which acts as the Pros-phosphohistidine intermediate.

Belongs to the NDK family. Homotetramer. Mg(2+) serves as cofactor.

The protein localises to the cytoplasm. The catalysed reaction is a 2'-deoxyribonucleoside 5'-diphosphate + ATP = a 2'-deoxyribonucleoside 5'-triphosphate + ADP. It catalyses the reaction a ribonucleoside 5'-diphosphate + ATP = a ribonucleoside 5'-triphosphate + ADP. Major role in the synthesis of nucleoside triphosphates other than ATP. The ATP gamma phosphate is transferred to the NDP beta phosphate via a ping-pong mechanism, using a phosphorylated active-site intermediate. The sequence is that of Nucleoside diphosphate kinase from Anaeromyxobacter dehalogenans (strain 2CP-1 / ATCC BAA-258).